Here is a 361-residue protein sequence, read N- to C-terminus: Fructose-bisphosphate aldolase (361 aa).

Ser-63 lines the D-glyceraldehyde 3-phosphate pocket. Asp-110 (proton donor) is an active-site residue. Zn(2+) is bound by residues His-111, Asp-145, Glu-175, and His-227. Gly-228 contributes to the dihydroxyacetone phosphate binding site. His-266 contributes to the Zn(2+) binding site. Dihydroxyacetone phosphate-binding positions include 267-269 (GGS) and 288-291 (NLDT).

It belongs to the class II fructose-bisphosphate aldolase family. As to quaternary structure, homodimer. It depends on Zn(2+) as a cofactor.

It carries out the reaction beta-D-fructose 1,6-bisphosphate = D-glyceraldehyde 3-phosphate + dihydroxyacetone phosphate. It participates in carbohydrate degradation; glycolysis; D-glyceraldehyde 3-phosphate and glycerone phosphate from D-glucose: step 4/4. Its function is as follows. Catalyzes the aldol condensation of dihydroxyacetone phosphate (DHAP or glycerone-phosphate) with glyceraldehyde 3-phosphate (G3P) to form fructose 1,6-bisphosphate (FBP) in gluconeogenesis and the reverse reaction in glycolysis. This is Fructose-bisphosphate aldolase (FBA1) from Kluyveromyces lactis (strain ATCC 8585 / CBS 2359 / DSM 70799 / NBRC 1267 / NRRL Y-1140 / WM37) (Yeast).